Here is a 696-residue protein sequence, read N- to C-terminus: Two-component response regulator ORR22 (696 aa).

In terms of domain architecture, Response regulatory spans 27–142 (RVLAVDDDPV…ELRNIWQHVV (116 aa)). Asp-78 is modified (4-aspartylphosphate). The segment at 154–214 (LDFSKECNKP…DYQENDEPSA (61 aa)) is disordered. Polar residues predominate over residues 176-185 (TCGSSDQNGR). Positions 195 to 211 (GEDDDEGDDNDYQENDE) are enriched in acidic residues. Positions 214 to 273 (AAKKPRVVWSVELHRKFVAAVNQLGIDKAVPKRILELMNVEKLTRENVASHLQKYRLYLK) form a DNA-binding region, myb-like GARP.

It belongs to the ARR family. Type-B subfamily. In terms of processing, two-component system major event consists of a His-to-Asp phosphorelay between a sensor histidine kinase (HK) and a response regulator (RR). In plants, the His-to-Asp phosphorelay involves an additional intermediate named Histidine-containing phosphotransfer protein (HPt). This multistep phosphorelay consists of a His-Asp-His-Asp sequential transfer of a phosphate group between first a His and an Asp of the HK protein, followed by the transfer to a conserved His of the HPt protein and finally the transfer to an Asp in the receiver domain of the RR protein.

It is found in the nucleus. Transcriptional activator that binds specific DNA sequence. Functions as a response regulator involved in His-to-Asp phosphorelay signal transduction system. Phosphorylation of the Asp residue in the receiver domain activates the ability of the protein to promote the transcription of target genes. May directly activate some type-A response regulators in response to cytokinins. This Oryza sativa subsp. indica (Rice) protein is Two-component response regulator ORR22.